A 201-amino-acid chain; its full sequence is MVRRFCNGAVALGIALTACAAFPRAIMAIDLSRFYGHINTKRSDACHPYEPFKCPGDGLCISIQYLCDGAPDCQDGYDEDSRLCTAAKRPPVEETATFLQSLLASHGPNYLEKLFGNKARDTLKPLGGVEKVAIALSESQTIEDFGAALHLMRSDLEHLRSVFMAVENGDLGMLKSIGIKDSELGDVKFFLEKLVKTGFLD.

A signal peptide spans 1-28 (MVRRFCNGAVALGIALTACAAFPRAIMA). A propeptide spanning residues 43–201 (SDACHPYEPF…EKLVKTGFLD (159 aa)) is cleaved from the precursor. In terms of domain architecture, LDL-receptor class A spans 45 to 85 (ACHPYEPFKCPGDGLCISIQYLCDGAPDCQDGYDEDSRLCT). Disulfide bonds link cysteine 46–cysteine 60, cysteine 54–cysteine 73, and cysteine 67–cysteine 84.

As to expression, expressed in central brain, antennal and optical lobes, in gnathal, thoracic and abdominal ganglia and in the retrocerebral complex (at protein level).

Its subcellular location is the secreted. In Camponotus floridanus (Florida carpenter ant), this protein is IDLSRF-like peptide.